The following is a 150-amino-acid chain: Probable head completion/stabilization protein (150 aa).

This sequence to phage P2 protein L.

This is Probable head completion/stabilization protein from Haemophilus phage HP1 (strain HP1c1) (Bacteriophage HP1).